The primary structure comprises 429 residues: Saccharopine dehydrogenase-like oxidoreductase (429 aa).

Ala2 carries the N-acetylalanine modification. Ser217 carries the phosphoserine modification.

This sequence belongs to the saccharopine dehydrogenase family.

This Bos taurus (Bovine) protein is Saccharopine dehydrogenase-like oxidoreductase (SCCPDH).